The following is a 316-amino-acid chain: Pantothenate kinase (316 aa).

Position 99–106 (99–106 (GSVAVGKS)) interacts with ATP.

This sequence belongs to the prokaryotic pantothenate kinase family.

It is found in the cytoplasm. It catalyses the reaction (R)-pantothenate + ATP = (R)-4'-phosphopantothenate + ADP + H(+). Its pathway is cofactor biosynthesis; coenzyme A biosynthesis; CoA from (R)-pantothenate: step 1/5. The sequence is that of Pantothenate kinase (coaA) from Pasteurella multocida (strain Pm70).